The chain runs to 264 residues: Thymidylate synthase (264 aa).

Position 21 (R21) interacts with dUMP. H51 serves as a coordination point for (6R)-5,10-methylene-5,6,7,8-tetrahydrofolate. Residue 126–127 (RR) coordinates dUMP. C146 acts as the Nucleophile in catalysis. DUMP is bound by residues 166 to 169 (RSAD), N177, and 207 to 209 (HLY). Residue D169 coordinates (6R)-5,10-methylene-5,6,7,8-tetrahydrofolate. A263 is a (6R)-5,10-methylene-5,6,7,8-tetrahydrofolate binding site.

This sequence belongs to the thymidylate synthase family. Bacterial-type ThyA subfamily. As to quaternary structure, homodimer.

The protein resides in the cytoplasm. It catalyses the reaction dUMP + (6R)-5,10-methylene-5,6,7,8-tetrahydrofolate = 7,8-dihydrofolate + dTMP. Its pathway is pyrimidine metabolism; dTTP biosynthesis. Catalyzes the reductive methylation of 2'-deoxyuridine-5'-monophosphate (dUMP) to 2'-deoxythymidine-5'-monophosphate (dTMP) while utilizing 5,10-methylenetetrahydrofolate (mTHF) as the methyl donor and reductant in the reaction, yielding dihydrofolate (DHF) as a by-product. This enzymatic reaction provides an intracellular de novo source of dTMP, an essential precursor for DNA biosynthesis. The chain is Thymidylate synthase from Stutzerimonas stutzeri (strain A1501) (Pseudomonas stutzeri).